The chain runs to 434 residues: Tol-Pal system protein TolB (434 aa).

The signal sequence occupies residues 1–28; that stretch reads MMNTRVWCKIIGMLALLVWLVSSPSVFA.

This sequence belongs to the TolB family. The Tol-Pal system is composed of five core proteins: the inner membrane proteins TolA, TolQ and TolR, the periplasmic protein TolB and the outer membrane protein Pal. They form a network linking the inner and outer membranes and the peptidoglycan layer.

Its subcellular location is the periplasm. Part of the Tol-Pal system, which plays a role in outer membrane invagination during cell division and is important for maintaining outer membrane integrity. The protein is Tol-Pal system protein TolB of Nitrosococcus oceani (strain ATCC 19707 / BCRC 17464 / JCM 30415 / NCIMB 11848 / C-107).